The chain runs to 201 residues: Peptidyl-tRNA hydrolase (201 aa).

A tRNA-binding site is contributed by Y15. H20 (proton acceptor) is an active-site residue. 3 residues coordinate tRNA: Y66, N68, and N114.

The protein belongs to the PTH family. Monomer.

The protein localises to the cytoplasm. The enzyme catalyses an N-acyl-L-alpha-aminoacyl-tRNA + H2O = an N-acyl-L-amino acid + a tRNA + H(+). Its function is as follows. Hydrolyzes ribosome-free peptidyl-tRNAs (with 1 or more amino acids incorporated), which drop off the ribosome during protein synthesis, or as a result of ribosome stalling. In terms of biological role, catalyzes the release of premature peptidyl moieties from peptidyl-tRNA molecules trapped in stalled 50S ribosomal subunits, and thus maintains levels of free tRNAs and 50S ribosomes. The polypeptide is Peptidyl-tRNA hydrolase (Burkholderia pseudomallei (strain K96243)).